The chain runs to 126 residues: Fatty acid-binding protein, liver (126 aa).

Ala-2 is modified (N-acetylalanine). Cholate-binding residues include Arg-56, Gln-57, Lys-77, His-99, and Gln-101.

The protein belongs to the calycin superfamily. Fatty-acid binding protein (FABP) family.

Its subcellular location is the cytoplasm. In terms of biological role, binds free fatty acids and their coenzyme A derivatives, bilirubin, and some other small molecules in the cytoplasm. May be involved in intracellular lipid transport. Binds 2 molecules of cholate per subunit. The polypeptide is Fatty acid-binding protein, liver (FABP1) (Gallus gallus (Chicken)).